The following is a 310-amino-acid chain: Putative carbonic anhydrase 5 (310 aa).

The first 20 residues, 1 to 20, serve as a signal peptide directing secretion; it reads MPSHLLVLSLLVALLVVVSC. Residues 26–280 form the Alpha-carbonic anhydrase domain; that stretch reads HGWGYDENNG…LNGRRIQYRP (255 aa). The Zn(2+) site is built by histidine 117, histidine 119, and histidine 142. 223-224 contacts substrate; that stretch reads TT.

This sequence belongs to the alpha-carbonic anhydrase family.

The protein localises to the secreted. It catalyses the reaction hydrogencarbonate + H(+) = CO2 + H2O. Functionally, reversible hydration of carbon dioxide. This Caenorhabditis elegans protein is Putative carbonic anhydrase 5 (cah-5).